The chain runs to 343 residues: Homeobox protein DBX1 (343 aa).

Disordered stretches follow at residues 56 to 100 and 240 to 343; these read RSVP…TAFS and KERE…ITVS. The segment at residues 181-240 is a DNA-binding region (homeobox); that stretch reads GMLRRAVFSDVQRKALEKMFQKQKYISKPDRKKLAAKLGLKDSQVKIWFQNRRMKWRNSK. Low complexity predominate over residues 314 to 323; sequence AHSSSPGKPS. A compositionally biased stretch (acidic residues) spans 326–343; sequence SDSEEEEEGEEQEEITVS.

Belongs to the H2.0 homeobox family.

It is found in the nucleus. Could have a role in patterning the central nervous system during embryogenesis. Has a key role in regulating the distinct phenotypic features that distinguish two major classes of ventral interneurons, V0 and V1 neurons. Regulates the transcription factor profile, neurotransmitter phenotype, intraspinal migratory path and axonal trajectory of V0 neurons, features that differentiate them from an adjacent set of V1 neurons. This is Homeobox protein DBX1 (DBX1) from Homo sapiens (Human).